The sequence spans 1413 residues: DNA-directed RNA polymerase subunit beta' (1413 aa).

Positions 70, 72, 85, and 88 each coordinate Zn(2+). Mg(2+) contacts are provided by D461, D463, and D465. Residues C820, C894, C901, and C904 each contribute to the Zn(2+) site.

The protein belongs to the RNA polymerase beta' chain family. The RNAP catalytic core consists of 2 alpha, 1 beta, 1 beta' and 1 omega subunit. When a sigma factor is associated with the core the holoenzyme is formed, which can initiate transcription. It depends on Mg(2+) as a cofactor. Zn(2+) serves as cofactor.

It catalyses the reaction RNA(n) + a ribonucleoside 5'-triphosphate = RNA(n+1) + diphosphate. Its function is as follows. DNA-dependent RNA polymerase catalyzes the transcription of DNA into RNA using the four ribonucleoside triphosphates as substrates. This is DNA-directed RNA polymerase subunit beta' from Cupriavidus metallidurans (strain ATCC 43123 / DSM 2839 / NBRC 102507 / CH34) (Ralstonia metallidurans).